A 1072-amino-acid chain; its full sequence is MPKRLDINTILVIGSGPIVIGQAAEFDYSGTQACQSLKEEGYKVILVNSNPATIMTDTATADKVYIEPLTLEFVSRIIRKERPDAILPTLGGQTGLNMAVELAKSGVLDECGVEILGTKLSAIEQAEDRDLFRTLMQDLNEPTPPSEIIHNLDEAYGFVNEIGYPVIVRPAFTLGGTGGGICHNEEELIEIVTSGLKHSPVTQCLLEKSIAGCKEIEYEVMRDSNDNAIVVCNMENIDPVGVHTGDSIVVAPSQTLSDREYQMLRNTSLRIIRALGIEGGCNVQLALDPYSFQYYVIEVNPRVSRSSALASKATGYPIAKLAAKIAVGLTLDEIVNPVTQKTYACFEPALDYVVSKIPRWPFDKFESANRTLGTQMKATGEVMSIGRNLEESLLKAVRSLELGIYHLELDHLKELDKETMKKRIIKADDERLFIVAEAIRQGVTKEEINEWCEMDFFFLQKVENIVNMEREVKANVGNMEVLQTAKEMGFSDHYIAAAWNKTEREIYDMRKENNMMPVFKMVDTCAAEFESATPYYYSTYADENESIVTDRKSVVVLGSGPIRIGQGVEFDYATVHSVWAIKEAGYEAIIINNNPETVSTDFSISDKLYFEPLTIEDVMHIIDLEKPEGVIVQFGGQTAINLAAKLEEHGVKILGTSLEDLDRAEDRDKFEAALTKLGIPQPVGKTATTVEQAVAIAEEIGYPVLVRPSYVLGGRAMEIVYRQEELLHYMKNAVKVHADHPVLIDRYMVGKEIEVDAISDGENVFIPGIMEHIERAGVHSGDSIGVYPPQSLSEKLKEQIIEHTIALGKGLNIVGLLNIQFVVFKDQVYVIEVNPRASRTVPFLSKITGVPMANVATKVILGQDLVEQGYGTGYHPEEKEVYVKAPVFSFAKLRSVDTTLGPEMKSTGEVMGKDLTLEKALYKGLVASGINIPTHGSVIITVADKDKEEAMEIAKRFHEIGYNLLATAGTAQSLEEQNIPVQVVNKIDSEDYNLLDIIRQGKAQFVINTLTKGKQPARDGFRIRRESVENGVACLTSLDTTRAILRVLESMTFSAHSMKEITQTKRHEVVHA.

The interval 1-401 (MPKRLDINTI…SLLKAVRSLE (401 aa)) is carboxyphosphate synthetic domain. Residues R129, R169, G175, G176, K208, I210, E215, G241, V242, H243, Q284, and E298 each contribute to the ATP site. One can recognise an ATP-grasp 1 domain in the interval 133-327 (RTLMQDLNEP…IAKLAAKIAV (195 aa)). Residues Q284, E298, and N300 each coordinate Mg(2+). Residues Q284, E298, and N300 each coordinate Mn(2+). The segment at 402 to 546 (LGIYHLELDH…YSTYADENES (145 aa)) is oligomerization domain. Positions 547–929 (IVTDRKSVVV…ALYKGLVASG (383 aa)) are carbamoyl phosphate synthetic domain. Positions 671 to 861 (EAALTKLGIP…MANVATKVIL (191 aa)) constitute an ATP-grasp 2 domain. ATP is bound by residues R707, R746, E752, G777, V778, H779, S780, Q820, and E832. Positions 820, 832, and 834 each coordinate Mg(2+). Mn(2+)-binding residues include Q820, E832, and N834. In terms of domain architecture, MGS-like spans 930-1072 (INIPTHGSVI…QTKRHEVVHA (143 aa)). Residues 930-1072 (INIPTHGSVI…QTKRHEVVHA (143 aa)) form an allosteric domain region.

Belongs to the CarB family. In terms of assembly, composed of two chains; the small (or glutamine) chain promotes the hydrolysis of glutamine to ammonia, which is used by the large (or ammonia) chain to synthesize carbamoyl phosphate. Tetramer of heterodimers (alpha,beta)4. It depends on Mg(2+) as a cofactor. The cofactor is Mn(2+).

The catalysed reaction is hydrogencarbonate + L-glutamine + 2 ATP + H2O = carbamoyl phosphate + L-glutamate + 2 ADP + phosphate + 2 H(+). The enzyme catalyses hydrogencarbonate + NH4(+) + 2 ATP = carbamoyl phosphate + 2 ADP + phosphate + 2 H(+). It participates in amino-acid biosynthesis; L-arginine biosynthesis; carbamoyl phosphate from bicarbonate: step 1/1. The protein operates within pyrimidine metabolism; UMP biosynthesis via de novo pathway; (S)-dihydroorotate from bicarbonate: step 1/3. Large subunit of the glutamine-dependent carbamoyl phosphate synthetase (CPSase). CPSase catalyzes the formation of carbamoyl phosphate from the ammonia moiety of glutamine, carbonate, and phosphate donated by ATP, constituting the first step of 2 biosynthetic pathways, one leading to arginine and/or urea and the other to pyrimidine nucleotides. The large subunit (synthetase) binds the substrates ammonia (free or transferred from glutamine from the small subunit), hydrogencarbonate and ATP and carries out an ATP-coupled ligase reaction, activating hydrogencarbonate by forming carboxy phosphate which reacts with ammonia to form carbamoyl phosphate. The protein is Carbamoyl phosphate synthase large chain of Bacillus cereus (strain ATCC 14579 / DSM 31 / CCUG 7414 / JCM 2152 / NBRC 15305 / NCIMB 9373 / NCTC 2599 / NRRL B-3711).